The following is a 196-amino-acid chain: Small ribosomal subunit protein uS4c (196 aa).

The interval 17 to 36 is disordered; sequence ALPGLTRKTPKSGSNLKKKF. An S4 RNA-binding domain is found at 89–169; that stretch reads MRLDNILFRL…LPKHLTIDTL (81 aa).

This sequence belongs to the universal ribosomal protein uS4 family. Part of the 30S ribosomal subunit. Contacts protein S5. The interaction surface between S4 and S5 is involved in control of translational fidelity.

It is found in the plastid. The protein localises to the chloroplast. One of the primary rRNA binding proteins, it binds directly to 16S rRNA where it nucleates assembly of the body of the 30S subunit. In terms of biological role, with S5 and S12 plays an important role in translational accuracy. This chain is Small ribosomal subunit protein uS4c (rps4), found in Festuca gigantea (Giant fescue).